The following is a 256-amino-acid chain: DNA repair protein RecO (256 aa).

The protein belongs to the RecO family.

In terms of biological role, involved in DNA repair and RecF pathway recombination. The polypeptide is DNA repair protein RecO (Bacillus pumilus (strain SAFR-032)).